Reading from the N-terminus, the 354-residue chain is UPF0324 membrane protein BL1094 (354 aa).

10 helical membrane-spanning segments follow: residues 12–33 (IATV…FASW), 43–65 (FGAL…SAYV), 86–108 (LLRL…TQGI), 112–129 (PIAA…YAIA), 138–160 (LAIL…LAGS), 175–197 (VTMA…IALG), 239–256 (LSRV…AIWW), 271–293 (VAFP…VPFV), 300–321 (LVDF…NVNF), and 331–353 (PMLA…AMLF).

The protein belongs to the UPF0324 family.

The protein localises to the cell membrane. In Bifidobacterium longum (strain NCC 2705), this protein is UPF0324 membrane protein BL1094.